A 98-amino-acid polypeptide reads, in one-letter code: Prolactin-releasing peptide (98 aa).

Positions 1 to 22 (MKAVGAWLLCLLLLGLALQGAA) are cleaved as a signal peptide. Disordered regions lie at residues 52-71 (RFGR…PRRV) and 79-98 (GGAE…LVQE). Phe53 is subject to Phenylalanine amide. Residues 58–98 (AAPGDGPRPGPRRVPACFRLEGGAEPSRALPGRLTAQLVQE) constitute a propeptide that is removed on maturation.

Post-translationally, amidation of C-terminus is required for receptor interaction. As to expression, medulla oblongata and hypothalamus.

It localises to the secreted. In terms of biological role, stimulates prolactin (PRL) release and regulates the expression of prolactin through its receptor GPR10. May stimulate lactotrophs directly to secrete PRL. The protein is Prolactin-releasing peptide (PRLH) of Bos taurus (Bovine).